The primary structure comprises 677 residues: Methionine--tRNA ligase (677 aa).

The 'HIGH' region motif lies at 15–25 (PYANGSIHLGH). 4 residues coordinate Zn(2+): Cys146, Cys149, Cys159, and Cys162. A 'KMSKS' region motif is present at residues 333–337 (KMSKS). Lys336 is an ATP binding site. The region spanning 575–677 (DFAKVDLRVA…AGAKPGHQVK (103 aa)) is the tRNA-binding domain.

The protein belongs to the class-I aminoacyl-tRNA synthetase family. MetG type 1 subfamily. As to quaternary structure, homodimer. The cofactor is Zn(2+).

The protein resides in the cytoplasm. It catalyses the reaction tRNA(Met) + L-methionine + ATP = L-methionyl-tRNA(Met) + AMP + diphosphate. Its function is as follows. Is required not only for elongation of protein synthesis but also for the initiation of all mRNA translation through initiator tRNA(fMet) aminoacylation. The polypeptide is Methionine--tRNA ligase (metG) (Escherichia coli (strain K12)).